We begin with the raw amino-acid sequence, 160 residues long: Protein cornichon homolog 3 (160 aa).

Topologically, residues 1 to 10 are cytoplasmic; it reads MAFTFAAFCY. A helical transmembrane segment spans residues 11–31; the sequence is MLSLVLCAALIFFAIWHIIAF. Topologically, residues 32–72 are lumenal; sequence DELRTDFKSPIDQCNPVHARERLRNIERICFLLRKLVLPEY. A helical transmembrane segment spans residues 73–93; that stretch reads SIHSLFCVMFLCAQEWLTLGL. Over 94 to 138 the chain is Cytoplasmic; it reads NVPLLFYHFWRYFHCPADSSELAYDPPVVMNADTLSYCQKEAWCK. A helical transmembrane segment spans residues 139–159; sequence LAFYLLSFFYYLYCMIYTLVS. Residue S160 is a topological domain, lumenal.

The protein belongs to the cornichon family. As to quaternary structure, acts as an auxiliary subunit for AMPA-selective glutamate receptors (AMPARs). Found in a complex with GRIA1, GRIA2, GRIA3, GRIA4, CNIH2, CACNG2, CACNG3, CACNG4, CACNG5, CACNG7 and CACNG8. As to expression, brain. Expressed in the neocortex, hippocampal formation, and cerebellum (at protein level).

Its subcellular location is the postsynaptic cell membrane. In terms of biological role, regulates the trafficking and gating properties of AMPA-selective glutamate receptors (AMPARs). Promotes their targeting to the cell membrane and synapses and modulates their gating properties by regulating their rates of activation, deactivation and desensitization. The protein is Protein cornichon homolog 3 (Cnih3) of Rattus norvegicus (Rat).